The sequence spans 292 residues: MSRNYEKLSIEEFGAHLLGTVDLDPIYLALRRMELPEAQLNRWLLAYWCLYNGGEASYLSEFEGREFFEMLNHAAENVREAPIGGRWPRGAERRHWRGAQATSSVEYLIDRYDDRPEDMAAYCAGQGGTFLEVTKRVQEHRLFGPWIGFKVADMVDRVLGKPVSFDNAAVFMFKDPYKAACIQYEVNPNIPDHVLADGSVAPRNRELVTPETVHHVAQHLIEHFKGFQAPPLGDRPVNIQEVETILCKWKSHQNGHYPLFKDIVEIREAALPWAKVSKTAQAFFEAMPEVTQ.

This sequence belongs to the thymidine aminotransferase family.

The enzyme catalyses 5-phosphomethyl-dUMP in DNA + glycine = 5-N(alpha)-glycyl-dTMP in DNA + phosphate. Its function is as follows. Transfers glycine to 5-phosphomethyl-2'-deoxyuridine (5-PmdU) to produce 5-Nalpha-glycinylthymidine (Nalpha-GlyT) on DNA as a step in the pathway leading to thymidine hypermodifications in the viral genome. As a final result of the pathway of hypermodification, 5-acetylaminomethyl-2'-deoxyuridine (5-AcNmdU) substitutes for a subset of thymidines in the viral DNA. These modifications probably prevent degradation of viral genome by the host restriction-modification antiviral defense system. This Pseudomonas phage PaMx11 protein is Glycinyltransferase.